Here is a 1091-residue protein sequence, read N- to C-terminus: Protein diaphanous (1091 aa).

A disordered region spans residues 1 to 37; it reads MSRHEKTKSTGGGLLDSLFGRPSKSKGGTISSGTLAH. The basic region stretch occupies residues 1 to 56; it reads MSRHEKTKSTGGGLLDSLFGRPSKSKGGTISSGTLAHGGRPVSADNYVVPGVEDFE. Over residues 25–34 the composition is skewed to low complexity; the sequence is SKGGTISSGT. In terms of domain architecture, GBD/FH3 spans 59-431; that stretch reads IQQLSVAELD…QIVFHKGYCD (373 aa). A coiled-coil region spans residues 455–496; that stretch reads KAKESKRSEEYEKKIEQLESAKQEAEAKAAHLEEKVKLMEAN. Disordered regions lie at residues 499–589, 994–1021, and 1039–1072; these read AAPS…MMMG, RLQEAREQSAREQQERQQRKKAVVDMDA, and GSAFGQRNRQARRQRPAGAERRAQLSRSRSRTRV. The span at 512 to 572 shows a compositional bias: pro residues; the sequence is PMPPPPPGGG…MGGPPPPPMP (61 aa). In terms of domain architecture, FH1 spans 512 to 596; the sequence is PMPPPPPGGG…MMGPMVPVLP (85 aa). Residues 601–1001 enclose the FH2 domain; it reads PKKKWDVKNP…KRRLQEAREQ (401 aa). Residues 994 to 1010 are compositionally biased toward basic and acidic residues; it reads RLQEAREQSAREQQERQ. A DAD domain is found at 1022-1054; the sequence is PQTQEGVMDSLLEALQTGSAFGQRNRQARRQRP.

The protein belongs to the formin homology family. Diaphanous subfamily. May interact (via CBD/FH3 domain) with Rho1.

It is found in the cytoplasm. The protein resides in the cytoskeleton. It localises to the cleavage furrow. Its subcellular location is the apical cell membrane. Required for cytokinesis in both mitosis and meiosis. Has a role in actin cytoskeleton organization and is essential for many, if not all, actin-mediated events involving membrane invagination. May serve as a mediator between signaling molecules and actin organizers at specific phases of the cell cycle. Possible component of the contractile ring or may control its function. The sequence is that of Protein diaphanous (dia) from Drosophila melanogaster (Fruit fly).